Consider the following 147-residue polypeptide: Mitochondrial import receptor subunit TOM20 homolog (147 aa).

Over 1-3 (MVV) the chain is Mitochondrial intermembrane. The chain crosses the membrane as a helical span at residues 4–26 (VGKTSAIAAGVCGALFLGYCIYF). The Cytoplasmic segment spans residues 27–147 (DRKRRSDPNF…AQNLAEDDVE (121 aa)).

The protein belongs to the Tom20 family. As to quaternary structure, forms part of the preprotein translocase complex of the outer mitochondrial membrane (TOM complex). Interacts with tom22.

It localises to the mitochondrion outer membrane. In terms of biological role, central component of the receptor complex responsible for the recognition and translocation of cytosolically synthesized mitochondrial preproteins. Together with tom22 functions as the transit peptide receptor at the surface of the mitochondrion outer membrane and facilitates the movement of preproteins into the tom40 translocation pore. The protein is Mitochondrial import receptor subunit TOM20 homolog (tomm20) of Xenopus tropicalis (Western clawed frog).